The sequence spans 198 residues: NADH-quinone oxidoreductase subunit B (198 aa).

The span at 1–20 (MGLNPTQVSTSGSPQVSQPA) shows a compositional bias: polar residues. The interval 1 to 29 (MGLNPTQVSTSGSPQVSQPATGVLDPRTG) is disordered. Positions 77, 78, 142, and 172 each coordinate [4Fe-4S] cluster.

The protein belongs to the complex I 20 kDa subunit family. As to quaternary structure, NDH-1 is composed of 14 different subunits. Subunits NuoB, C, D, E, F, and G constitute the peripheral sector of the complex. [4Fe-4S] cluster serves as cofactor.

It localises to the cell inner membrane. It catalyses the reaction a quinone + NADH + 5 H(+)(in) = a quinol + NAD(+) + 4 H(+)(out). In terms of biological role, NDH-1 shuttles electrons from NADH, via FMN and iron-sulfur (Fe-S) centers, to quinones in the respiratory chain. The immediate electron acceptor for the enzyme in this species is believed to be ubiquinone. Couples the redox reaction to proton translocation (for every two electrons transferred, four hydrogen ions are translocated across the cytoplasmic membrane), and thus conserves the redox energy in a proton gradient. The chain is NADH-quinone oxidoreductase subunit B from Afipia carboxidovorans (strain ATCC 49405 / DSM 1227 / KCTC 32145 / OM5) (Oligotropha carboxidovorans).